Here is a 367-residue protein sequence, read N- to C-terminus: Cobalt-precorrin-5B C(1)-methyltransferase (367 aa).

The protein belongs to the CbiD family.

The catalysed reaction is Co-precorrin-5B + S-adenosyl-L-methionine = Co-precorrin-6A + S-adenosyl-L-homocysteine. The protein operates within cofactor biosynthesis; adenosylcobalamin biosynthesis; cob(II)yrinate a,c-diamide from sirohydrochlorin (anaerobic route): step 6/10. Catalyzes the methylation of C-1 in cobalt-precorrin-5B to form cobalt-precorrin-6A. In Thermosynechococcus vestitus (strain NIES-2133 / IAM M-273 / BP-1), this protein is Cobalt-precorrin-5B C(1)-methyltransferase.